Consider the following 315-residue polypeptide: MRTFLKFSTLVSKGVLVLVCSFFLTASSNAYPIFAQQNYANPREANGRIVCANCHLAEKPIEIEVPQAVLPDTVFEAVVKIPYDKQIKQVLANGKKGDLNVGAVLILPDGFEIAPPDRIPEEMKAKVGKLYFQPYSAEKKTIFVVGPVPGKKYSEMVFPILSPDPAKTKSISYLKYPIYVGGNRGRGQVYPDGSKSNNTIFTASAAGKITAIEPAGKKGGYTLTIETANGESISEKLPPGPELVVNIGDIVGVDQALTTNPNVGGFGQGETEVVLQNPLRIQGLLVFFLFVLLAQVFLVLKKKQFEKVQLAEMNF.

The first 30 residues, 1–30 (MRTFLKFSTLVSKGVLVLVCSFFLTASSNA), serve as a signal peptide directing secretion. Residues Y31, C51, C54, and H55 each contribute to the heme site. The helical transmembrane segment at 281–300 (IQGLLVFFLFVLLAQVFLVL) threads the bilayer.

The protein belongs to the cytochrome f family. In terms of assembly, the 4 large subunits of the cytochrome b6-f complex are cytochrome b6, subunit IV (17 kDa polypeptide, petD), cytochrome f and the Rieske protein, while the 4 small subunits are PetG, PetL, PetM and PetN. The complex functions as a dimer. It depends on heme as a cofactor.

It localises to the plastid. The protein resides in the chloroplast thylakoid membrane. Component of the cytochrome b6-f complex, which mediates electron transfer between photosystem II (PSII) and photosystem I (PSI), cyclic electron flow around PSI, and state transitions. The sequence is that of Cytochrome f (petA) from Chlorella vulgaris (Green alga).